The chain runs to 635 residues: Chaperone protein DnaK (635 aa).

At Thr-200 the chain carries Phosphothreonine; by autocatalysis. Residues 595–635 (KAQPLTEKVQAKSSAENTSKEKSKADDDVVDADFEEVKDDK) are disordered. Residues 612-621 (TSKEKSKADD) are compositionally biased toward basic and acidic residues. Acidic residues predominate over residues 622 to 635 (DVVDADFEEVKDDK).

This sequence belongs to the heat shock protein 70 family.

Its function is as follows. Acts as a chaperone. The protein is Chaperone protein DnaK of Ruthia magnifica subsp. Calyptogena magnifica.